The chain runs to 405 residues: Indoleamine 2,3-dioxygenase acdA (405 aa).

Histidine 312 provides a ligand contact to heme.

It belongs to the indoleamine 2,3-dioxygenase family. The cofactor is heme.

It catalyses the reaction L-tryptophan + O2 = N-formyl-L-kynurenine. Its pathway is secondary metabolite biosynthesis. Functionally, indoleamine 2,3-dioxygenase; part of the gene cluster that mediates the biosynthesis of aspcandine, a pyrrolobenzazepine alkaloid. Initially, the indoleamine 2,3-dioxygenase acdA accepts L-tryptophan and performs the oxidative opening of the indole ring to yield N'-formyl-L-kynurenine, which undergoes the spontaneous deformylation reaction to provide L-kynurenine. The kynurenine 3-monooxygenase acdD then hydroxylates L-kynurenine to afford 3-hydroxy-L-kynurenine. 3-hydroxy-L-kynurenine is activated by the A domain of the NRPS-PKS acdB and subsequently loaded onto the enzyme. The KS domain conducts the decarboxylative condensation of the 3-hydroxy-L-kynurenyl and malonyl moieties, and subsequent nucleophilic attacks by the two amino groups would occur nonenzymatically at two distinct positions, achieving the chain release and the construction of the tricyclic system. Finally, a dehydration reaction completes the biosynthesis to yield aspcandine. The polypeptide is Indoleamine 2,3-dioxygenase acdA (Aspergillus candidus).